We begin with the raw amino-acid sequence, 1900 residues long: Phosphatidylinositol 4-kinase STT4 (1900 aa).

The residue at position 459 (Ser-459) is a Phosphoserine. The PIK helical domain maps to 1345-1530 (KIEGADSNEL…KPTLDRIRER (186 aa)). The interval 1531 to 1648 (MVSSFSQSHR…EKWQAAIFKV (118 aa)) is pleckstrin homology (PH) domain conferring phosphoinositide binding specificity. The PI3K/PI4K catalytic domain maps to 1617–1884 (FMATFKIKKD…LIRKSYESIF (268 aa)). The tract at residues 1623 to 1629 (IKKDVKD) is G-loop. Positions 1751–1759 (QFKDRHNGN) are catalytic loop. Residues 1770-1794 (HIDFGFIFDIVPGGIKFEAVPFKLT) are activation loop.

The protein belongs to the PI3/PI4-kinase family. Type III PI4K subfamily.

The enzyme catalyses a 1,2-diacyl-sn-glycero-3-phospho-(1D-myo-inositol) + ATP = a 1,2-diacyl-sn-glycero-3-phospho-(1D-myo-inositol 4-phosphate) + ADP + H(+). In terms of biological role, acts on phosphatidylinositol (PI) in the first committed step in the production of the second messenger inositol 1,4,5,-trisphosphate. STT4 functions in PKC1 protein kinase pathway. This chain is Phosphatidylinositol 4-kinase STT4 (STT4), found in Saccharomyces cerevisiae (strain ATCC 204508 / S288c) (Baker's yeast).